A 211-amino-acid chain; its full sequence is MPVIAVVDYEMGNLHSVCKGLEKAGATPNVTYSPKELEQADAIVLPGVGAFDPAVQHLRARGLEQPIKDAIASGKPFLGICLGLQILFESSAEGTQPGLGIIKGKVRRFRPEPDITIPHMGWNQLEMTQAKSILWEHLPSDPWVYFVHSYYVDPIDPLIRAATITHGTQTVTAAIAHENLMAVQFHPEKSSNIGLQILSNFVAQVREKIPA.

Residues 3-211 (VIAVVDYEMG…VAQVREKIPA (209 aa)) form the Glutamine amidotransferase type-1 domain. The active-site Nucleophile is cysteine 81. Residues histidine 186 and glutamate 188 contribute to the active site.

In terms of assembly, heterodimer of HisH and HisF.

The protein resides in the cytoplasm. The catalysed reaction is 5-[(5-phospho-1-deoxy-D-ribulos-1-ylimino)methylamino]-1-(5-phospho-beta-D-ribosyl)imidazole-4-carboxamide + L-glutamine = D-erythro-1-(imidazol-4-yl)glycerol 3-phosphate + 5-amino-1-(5-phospho-beta-D-ribosyl)imidazole-4-carboxamide + L-glutamate + H(+). It catalyses the reaction L-glutamine + H2O = L-glutamate + NH4(+). It participates in amino-acid biosynthesis; L-histidine biosynthesis; L-histidine from 5-phospho-alpha-D-ribose 1-diphosphate: step 5/9. IGPS catalyzes the conversion of PRFAR and glutamine to IGP, AICAR and glutamate. The HisH subunit catalyzes the hydrolysis of glutamine to glutamate and ammonia as part of the synthesis of IGP and AICAR. The resulting ammonia molecule is channeled to the active site of HisF. This Nostoc punctiforme (strain ATCC 29133 / PCC 73102) protein is Imidazole glycerol phosphate synthase subunit HisH.